Here is a 267-residue protein sequence, read N- to C-terminus: PF03932 family protein CutC (267 aa).

The protein belongs to the CutC family.

It is found in the cytoplasm. This chain is PF03932 family protein CutC, found in Xylella fastidiosa (strain Temecula1 / ATCC 700964).